Here is a 514-residue protein sequence, read N- to C-terminus: Probable lipid II flippase MurJ (514 aa).

14 helical membrane passes run 3–23, 25–45, 92–112, 130–150, 157–177, 186–206, 245–265, 271–291, 315–335, 354–374, 386–406, 409–429, 448–468, and 481–501; these read ILKS…FGFF, DVLI…FIAF, ILVL…IIFI, LLKI…CSSI, FFIP…FSFF, IISL…YQFP, ISLI…ISWI, LIEF…FTSF, LILS…LVII, LELY…VSAF, ISIL…FYFQ, GLAL…YWKL, LLIA…FIPS, and LFTI…FLGI.

It belongs to the MurJ/MviN family.

Its subcellular location is the cell inner membrane. Its pathway is cell wall biogenesis; peptidoglycan biosynthesis. Functionally, involved in peptidoglycan biosynthesis. Transports lipid-linked peptidoglycan precursors from the inner to the outer leaflet of the cytoplasmic membrane. In Buchnera aphidicola subsp. Schizaphis graminum (strain Sg), this protein is Probable lipid II flippase MurJ.